The sequence spans 162 residues: MKEVKVGIGDYAVGKGNGIISTYGLGSCVGITLYDRVTKVGGLLHALLPEAARYGHRGNPAKYVDTGLQLLLKEVIKLGASKFRLEAKLFGGAQMFDNIRSEELKIGEKNVQVAKRELRKLGIRLVAEDTGGKGGRTIYLDLSTGKVRMRKVTEGKVIEKVY.

It belongs to the CheD family.

The enzyme catalyses L-glutaminyl-[protein] + H2O = L-glutamyl-[protein] + NH4(+). In terms of biological role, probably deamidates glutamine residues to glutamate on methyl-accepting chemotaxis receptors (MCPs), playing an important role in chemotaxis. The polypeptide is Probable chemoreceptor glutamine deamidase CheD (Pyrococcus horikoshii (strain ATCC 700860 / DSM 12428 / JCM 9974 / NBRC 100139 / OT-3)).